Here is a 366-residue protein sequence, read N- to C-terminus: Leucine dehydrogenase (366 aa).

Residue lysine 82 is part of the active site. Residue 182–188 (GVGNVAY) participates in NAD(+) binding.

The protein belongs to the Glu/Leu/Phe/Val dehydrogenases family.

The catalysed reaction is L-leucine + NAD(+) + H2O = 4-methyl-2-oxopentanoate + NH4(+) + NADH + H(+). It functions in the pathway amino-acid degradation; L-leucine degradation; 4-methyl-2-oxopentanoate from L-leucine (dehydrogenase route): step 1/1. In terms of biological role, catalyzes the reversible deamination of L-leucine to 4-methyl-2-oxopentanoate. In Bacillus cereus, this protein is Leucine dehydrogenase (ldh).